Reading from the N-terminus, the 339-residue chain is Anthranilate phosphoribosyltransferase (339 aa).

Residues glycine 80, 83–84 (GD), threonine 88, 90–93 (NIST), 108–116 (KHGNRSVSS), and serine 120 contribute to the 5-phospho-alpha-D-ribose 1-diphosphate site. Glycine 80 provides a ligand contact to anthranilate. Serine 92 serves as a coordination point for Mg(2+). Residue asparagine 111 participates in anthranilate binding. Arginine 166 is an anthranilate binding site. Residues aspartate 225 and glutamate 226 each contribute to the Mg(2+) site.

Belongs to the anthranilate phosphoribosyltransferase family. Homodimer. Mg(2+) serves as cofactor.

It carries out the reaction N-(5-phospho-beta-D-ribosyl)anthranilate + diphosphate = 5-phospho-alpha-D-ribose 1-diphosphate + anthranilate. It participates in amino-acid biosynthesis; L-tryptophan biosynthesis; L-tryptophan from chorismate: step 2/5. Functionally, catalyzes the transfer of the phosphoribosyl group of 5-phosphorylribose-1-pyrophosphate (PRPP) to anthranilate to yield N-(5'-phosphoribosyl)-anthranilate (PRA). The sequence is that of Anthranilate phosphoribosyltransferase from Desulfosudis oleivorans (strain DSM 6200 / JCM 39069 / Hxd3) (Desulfococcus oleovorans).